Consider the following 271-residue polypeptide: 4-hydroxy-tetrahydrodipicolinate reductase (271 aa).

Residues 10–15 (GAGGRM), E36, 100–102 (GTT), and 124–127 (SGNM) contribute to the NAD(+) site. H157 functions as the Proton donor/acceptor in the catalytic mechanism. H158 is a (S)-2,3,4,5-tetrahydrodipicolinate binding site. K161 acts as the Proton donor in catalysis. Residue 167–168 (GT) coordinates (S)-2,3,4,5-tetrahydrodipicolinate.

This sequence belongs to the DapB family.

Its subcellular location is the cytoplasm. The catalysed reaction is (S)-2,3,4,5-tetrahydrodipicolinate + NAD(+) + H2O = (2S,4S)-4-hydroxy-2,3,4,5-tetrahydrodipicolinate + NADH + H(+). The enzyme catalyses (S)-2,3,4,5-tetrahydrodipicolinate + NADP(+) + H2O = (2S,4S)-4-hydroxy-2,3,4,5-tetrahydrodipicolinate + NADPH + H(+). Its pathway is amino-acid biosynthesis; L-lysine biosynthesis via DAP pathway; (S)-tetrahydrodipicolinate from L-aspartate: step 4/4. In terms of biological role, catalyzes the conversion of 4-hydroxy-tetrahydrodipicolinate (HTPA) to tetrahydrodipicolinate. This is 4-hydroxy-tetrahydrodipicolinate reductase from Rhodopseudomonas palustris (strain BisB5).